Here is a 385-residue protein sequence, read N- to C-terminus: MSWQQRVDDALTARRATDTLRRRYVVSQGAGRWLVANGRQYLNFSSNDYLGLSQHPQIIRAWQQAAMRFGVGSGGSGHISGYSVAHQALEEELAQWLGYPRALLFISGFAANQAVITALMKKNDRIVADRLSHASLLEAANLSPAQLRRFIHNDTQHLSRLLQSPCVGQQLVVTEGVYSMDGDSAPLAEIQHIARRHHAWLLVDDAHGIGVTGDEGRGTCWQRGVKPELLVVTFGKGFGVSGAAVLCSESVADYLLQFARHLVYSTSMPPAQAQALSASLAVIRSDEGGERREKLAALVQRFRAGVNASRFTLLNAHSAIQPLIVGDNSHALRLAEALRQQGCWATAIRPPTVPVGTARLRLTLTQAHEACDIDRLLEVLHGAGE.

Position 21 (arginine 21) interacts with substrate. 108–109 (GF) is a binding site for pyridoxal 5'-phosphate. Histidine 133 contributes to the substrate binding site. Residues serine 179, histidine 207, and threonine 233 each coordinate pyridoxal 5'-phosphate. At lysine 236 the chain carries N6-(pyridoxal phosphate)lysine. Threonine 352 contributes to the substrate binding site.

It belongs to the class-II pyridoxal-phosphate-dependent aminotransferase family. BioF subfamily. In terms of assembly, homodimer. Pyridoxal 5'-phosphate serves as cofactor.

The enzyme catalyses 6-carboxyhexanoyl-[ACP] + L-alanine + H(+) = (8S)-8-amino-7-oxononanoate + holo-[ACP] + CO2. It functions in the pathway cofactor biosynthesis; biotin biosynthesis. Its function is as follows. Catalyzes the decarboxylative condensation of pimeloyl-[acyl-carrier protein] and L-alanine to produce 8-amino-7-oxononanoate (AON), [acyl-carrier protein], and carbon dioxide. In Salmonella schwarzengrund (strain CVM19633), this protein is 8-amino-7-oxononanoate synthase.